The sequence spans 343 residues: MADPSSQNPNLATPPPPSSPSPTHQIQSGTSELSPPSRPPCSTLSFLKTANRPKLRVTSEFDSDSLLFLNKVSCKLFDNLAKLKLSFQNNSQREISQPQVSFTSKHVSVLYDVEEKNTFIKSTLDVHPRLQLRALHNVKAQQGEVAMEANLTEPGYSLELSSPVPIGYPRATLKFPLGEISLQEKDEEEEEKQKRTLSVNGILKRQVMNGVCTALYTDEELRLRYAYKDDALSFIPSISLPSNAASFAFKRRFSPSDKLSYWYNFDSNMWSAVYKRTYGKDYKLKAGYDSDVRLGWASLWVGDEAGKVKTTPMKMKVQFMLQVPQDDIKSSVLMFRVKKRWDI.

2 stretches are compositionally biased toward polar residues: residues 1–11 and 23–43; these read MADPSSQNPNL and THQI…PCST. A disordered region spans residues 1-43; sequence MADPSSQNPNLATPPPPSSPSPTHQIQSGTSELSPPSRPPCST. Residues 1 to 73 constitute a chloroplast transit peptide; sequence MADPSSQNPN…DSLLFLNKVS (73 aa). Residues 74–76 are Cytoplasmic-facing; sequence CKL. The beta stranded transmembrane segment at 77-86 threads the bilayer; that stretch reads FDNLAKLKLS. Residues 87 to 103 lie on the Chloroplast intermembrane side of the membrane; it reads FQNNSQREISQPQVSFT. The beta stranded transmembrane segment at 104 to 113 threads the bilayer; it reads SKHVSVLYDV. Topologically, residues 114–129 are cytoplasmic; sequence EEKNTFIKSTLDVHPR. A beta stranded membrane pass occupies residues 130-137; it reads LQLRALHN. The Chloroplast intermembrane portion of the chain corresponds to 138–154; that stretch reads VKAQQGEVAMEANLTEP. A beta stranded transmembrane segment spans residues 155–164; it reads GYSLELSSPV. Over 165 to 169 the chain is Cytoplasmic; it reads PIGYP. Residues 170 to 178 traverse the membrane as a beta stranded segment; that stretch reads RATLKFPLG. The Chloroplast intermembrane segment spans residues 179 to 219; the sequence is EISLQEKDEEEEEKQKRTLSVNGILKRQVMNGVCTALYTDE. Residues 220 to 228 traverse the membrane as a beta stranded segment; it reads ELRLRYAYK. Residues 229–230 lie on the Cytoplasmic side of the membrane; sequence DD. Residues 231–240 form a beta stranded membrane-spanning segment; the sequence is ALSFIPSISL. Residue P241 is a topological domain, chloroplast intermembrane. Residues 242 to 250 traverse the membrane as a beta stranded segment; that stretch reads SNAASFAFK. Residues 251–257 are Cytoplasmic-facing; that stretch reads RRFSPSD. A beta stranded transmembrane segment spans residues 258–267; that stretch reads KLSYWYNFDS. Residues 268–269 lie on the Chloroplast intermembrane side of the membrane; it reads NM. A beta stranded membrane pass occupies residues 270–279; the sequence is WSAVYKRTYG. At 280 to 286 the chain is on the cytoplasmic side; it reads KDYKLKA. A beta stranded membrane pass occupies residues 287–296; it reads GYDSDVRLGW. Topologically, residues 297–316 are chloroplast intermembrane; sequence ASLWVGDEAGKVKTTPMKMK. A beta stranded membrane pass occupies residues 317–326; the sequence is VQFMLQVPQD. Residues 327–343 lie on the Cytoplasmic side of the membrane; the sequence is DIKSSVLMFRVKKRWDI.

This sequence belongs to the plastid outer envelope porin OEP37 (TC 1.B.47) family. In terms of assembly, forms an hourglass-shaped multimeric complex. Ubiquitously expressed at low levels. Mostly present in cotyledons, and accumulates in seedlings and embryos.

Its subcellular location is the plastid. It is found in the chloroplast outer membrane. Functionally, voltage-dependent peptide-sensitive high conductance rectifying cation channel with a strong affinity for TIC32 that is imported into the chloroplast. Conductance is pH-dependent decreasing with decreasing pH values. This is Outer envelope pore protein 37, chloroplastic (OEP37) from Arabidopsis thaliana (Mouse-ear cress).